A 252-amino-acid polypeptide reads, in one-letter code: Pimeloyl-[acyl-carrier protein] methyl ester esterase (252 aa).

Residues 15 to 239 (LVMLHGWAMH…FPHCGHAPFL (225 aa)) enclose the AB hydrolase-1 domain. Substrate-binding positions include W21, 81–82 (SL), and 143–147 (FLTLQ). S81 acts as the Nucleophile in catalysis. Catalysis depends on residues D207 and H235. A substrate-binding site is contributed by H235.

Belongs to the AB hydrolase superfamily. Carboxylesterase BioH family. In terms of assembly, monomer.

It is found in the cytoplasm. It carries out the reaction 6-carboxyhexanoyl-[ACP] methyl ester + H2O = 6-carboxyhexanoyl-[ACP] + methanol + H(+). It participates in cofactor biosynthesis; biotin biosynthesis. In terms of biological role, the physiological role of BioH is to remove the methyl group introduced by BioC when the pimeloyl moiety is complete. It allows to synthesize pimeloyl-ACP via the fatty acid synthetic pathway through the hydrolysis of the ester bonds of pimeloyl-ACP esters. This chain is Pimeloyl-[acyl-carrier protein] methyl ester esterase, found in Nitrosomonas europaea (strain ATCC 19718 / CIP 103999 / KCTC 2705 / NBRC 14298).